Consider the following 193-residue polypeptide: Ribosome maturation factor RimM (193 aa).

The PRC barrel domain occupies 100-173 (DDEFYYADLE…TLLIDPLAAG (74 aa)).

The protein belongs to the RimM family. Binds ribosomal protein uS19.

Its subcellular location is the cytoplasm. In terms of biological role, an accessory protein needed during the final step in the assembly of 30S ribosomal subunit, possibly for assembly of the head region. Essential for efficient processing of 16S rRNA. May be needed both before and after RbfA during the maturation of 16S rRNA. It has affinity for free ribosomal 30S subunits but not for 70S ribosomes. In Rhizobium etli (strain CIAT 652), this protein is Ribosome maturation factor RimM.